The sequence spans 413 residues: Clusterin-associated protein 1 (413 aa).

A coiled-coil region spans residues 185–308 (MRIAIKDLLA…KEEEKRLLKS (124 aa)). A disordered region spans residues 303-413 (KRLLKSGSND…EPLDESDNDF (111 aa)). Composition is skewed to acidic residues over residues 312–328 (DDSD…DSEL) and 360–388 (DSDE…EDES). Phosphoserine is present on residues S314, S324, and S326. Phosphoserine is present on S409.

This sequence belongs to the CLUAP1 family. Interacts with CLU/clusterin. Interacts with UBXN10; the interaction is direct. As to expression, expressed in all tissues tested including heart, kidney, skeletal muscle, eye, liver, ovary, oviduct, testes, lung and brain. Elevated levels in multiciliated cells such as the bronchioles of the lungs, ependymal cells of the brain and cells with a single primary cilia of heart and kidney.

It localises to the cell projection. The protein localises to the cilium. Its subcellular location is the nucleus. In terms of biological role, required for cilia biogenesis. Appears to function within the multiple intraflagellar transport complex B (IFT-B). Key regulator of hedgehog signaling. In Mus musculus (Mouse), this protein is Clusterin-associated protein 1 (Cluap1).